The sequence spans 116 residues: Beta-2-microglobulin (116 aa).

Positions 1-19 (MRALITFALLCLLYITVQG) are cleaved as a signal peptide. The Ig-like C1-type domain maps to 24-111 (PKVHVYSHFP…RHMKETKKFS (88 aa)). A disulfide bridge links Cys-44 with Cys-99.

Belongs to the beta-2-microglobulin family. In terms of assembly, heterodimer of an alpha chain and a beta chain. Beta-2-microglobulin is the beta-chain of major histocompatibility complex class I molecules.

Its subcellular location is the secreted. Component of the class I major histocompatibility complex (MHC). Involved in the presentation of peptide antigens to the immune system. The chain is Beta-2-microglobulin (b2m) from Danio rerio (Zebrafish).